A 348-amino-acid polypeptide reads, in one-letter code: S-adenosyl-L-methionine-dependent methyl transferase PigF (348 aa).

Residue E199 participates in S-adenosyl-L-methionine binding. H247 serves as the catalytic Proton acceptor.

It belongs to the class I-like SAM-binding methyltransferase superfamily. Cation-independent O-methyltransferase family.

The protein operates within antibiotic biosynthesis; prodigiosin biosynthesis. In terms of biological role, involved in the biosynthesis of 4-methoxy-2,2'-bipyrrole-5-carbaldehyde (MBC), one of the terminal products involved in the biosynthesis of the red antibiotic prodigiosin (Pig). Catalyzes the transfer of a methyl group from S-adenosyl-L-methionine (SAM) to the hydroxyl group of 4-hydroxy-2,2'-bipyrrole-5-carbaldehyde (HBC) to yield 4-methoxy-2,2'-bipyrrole-5-carbaldehyde (MBC). This is S-adenosyl-L-methionine-dependent methyl transferase PigF from Serratia sp. (strain ATCC 39006) (Prodigiosinella confusarubida).